The sequence spans 156 residues: ATP synthase subunit b (156 aa).

A helical transmembrane segment spans residues 7–29 (LLGQAISFLLFVWFCMKFVWPPL).

Belongs to the ATPase B chain family. In terms of assembly, F-type ATPases have 2 components, F(1) - the catalytic core - and F(0) - the membrane proton channel. F(1) has five subunits: alpha(3), beta(3), gamma(1), delta(1), epsilon(1). F(0) has three main subunits: a(1), b(2) and c(10-14). The alpha and beta chains form an alternating ring which encloses part of the gamma chain. F(1) is attached to F(0) by a central stalk formed by the gamma and epsilon chains, while a peripheral stalk is formed by the delta and b chains.

The protein resides in the cell inner membrane. In terms of biological role, f(1)F(0) ATP synthase produces ATP from ADP in the presence of a proton or sodium gradient. F-type ATPases consist of two structural domains, F(1) containing the extramembraneous catalytic core and F(0) containing the membrane proton channel, linked together by a central stalk and a peripheral stalk. During catalysis, ATP synthesis in the catalytic domain of F(1) is coupled via a rotary mechanism of the central stalk subunits to proton translocation. Its function is as follows. Component of the F(0) channel, it forms part of the peripheral stalk, linking F(1) to F(0). The sequence is that of ATP synthase subunit b from Shewanella pealeana (strain ATCC 700345 / ANG-SQ1).